Reading from the N-terminus, the 110-residue chain is BolA-like protein 3 (110 aa).

The protein belongs to the BolA/IbaG family. Interacts with NFU1.

The protein resides in the mitochondrion. Acts as a mitochondrial iron-sulfur (Fe-S) cluster assembly factor that facilitates (Fe-S) cluster insertion into a subset of mitochondrial proteins. Probably acts together with NFU1. The protein is BolA-like protein 3 (BOLA3) of Bos taurus (Bovine).